The following is a 39-amino-acid chain: Bacteriocin SRCAM 602 (39 aa).

This sequence belongs to the bacteriocin class IIA/YGNGV family.

Its subcellular location is the secreted. Bacteriocin with antibacterial activity against C.jejuni. This chain is Bacteriocin SRCAM 602, found in Paenibacillus polymyxa (Bacillus polymyxa).